Here is a 412-residue protein sequence, read N- to C-terminus: Glutamate-pyruvate aminotransferase AlaC (412 aa).

N6-(pyridoxal phosphate)lysine is present on Lys244.

Belongs to the class-I pyridoxal-phosphate-dependent aminotransferase family. In terms of assembly, homodimer. Pyridoxal 5'-phosphate is required as a cofactor.

It localises to the cytoplasm. The enzyme catalyses L-alanine + 2-oxoglutarate = pyruvate + L-glutamate. Its pathway is amino-acid biosynthesis; L-alanine biosynthesis. Involved in the biosynthesis of alanine. Catalyzes the transamination of pyruvate by glutamate, leading to the formation of L-alanine and 2-oxoglutarate. Is also able to catalyze the reverse reaction. The chain is Glutamate-pyruvate aminotransferase AlaC from Escherichia coli (strain K12).